The sequence spans 128 residues: uncharacterized protein (128 aa).

This is an uncharacterized protein from Mycoplasma pneumoniae (strain ATCC 29342 / M129 / Subtype 1) (Mycoplasmoides pneumoniae).